The following is a 287-amino-acid chain: Cis-prenyltransferase 7, chloroplastic (287 aa).

The N-terminal 34 residues, 1–34 (MLSLGFSLPPPSDNKLIITNNNQYNYRTNLANVC), are a transit peptide targeting the chloroplast. The active site involves D61.

Belongs to the UPP synthase family. It depends on Mg(2+) as a cofactor. Expressed in leaf trichomes and stem trichomes.

The protein resides in the plastid. Its subcellular location is the chloroplast. Uses geranylgeranyl diphosphate to catalyze the cis-prenyl chain elongation and produce polyprenyl diphosphate with a chain of 35 carbons. In Solanum lycopersicum (Tomato), this protein is Cis-prenyltransferase 7, chloroplastic.